Reading from the N-terminus, the 311-residue chain is Bifunctional protein FolD (311 aa).

174–176 (GKG) is an NADP(+) binding site.

It belongs to the tetrahydrofolate dehydrogenase/cyclohydrolase family. Homodimer.

It carries out the reaction (6R)-5,10-methylene-5,6,7,8-tetrahydrofolate + NADP(+) = (6R)-5,10-methenyltetrahydrofolate + NADPH. The enzyme catalyses (6R)-5,10-methenyltetrahydrofolate + H2O = (6R)-10-formyltetrahydrofolate + H(+). It functions in the pathway one-carbon metabolism; tetrahydrofolate interconversion. In terms of biological role, catalyzes the oxidation of 5,10-methylenetetrahydrofolate to 5,10-methenyltetrahydrofolate and then the hydrolysis of 5,10-methenyltetrahydrofolate to 10-formyltetrahydrofolate. The protein is Bifunctional protein FolD of Pyrobaculum neutrophilum (strain DSM 2338 / JCM 9278 / NBRC 100436 / V24Sta) (Thermoproteus neutrophilus).